The sequence spans 463 residues: Ribulose bisphosphate carboxylase large chain (463 aa).

An N6,N6,N6-trimethyllysine modification is found at Lys5. The substrate site is built by Asn114 and Thr164. Lys166 serves as the catalytic Proton acceptor. Lys168 contributes to the substrate binding site. Positions 192, 194, and 195 each coordinate Mg(2+). Position 192 is an N6-carboxylysine (Lys192). His285 (proton acceptor) is an active-site residue. 3 residues coordinate substrate: Arg286, His318, and Ser370.

The protein belongs to the RuBisCO large chain family. Type I subfamily. As to quaternary structure, heterohexadecamer of 8 large chains and 8 small chains; disulfide-linked. The disulfide link is formed within the large subunit homodimers. The cofactor is Mg(2+). The disulfide bond which can form in the large chain dimeric partners within the hexadecamer appears to be associated with oxidative stress and protein turnover.

The protein localises to the plastid. It localises to the chloroplast. The enzyme catalyses 2 (2R)-3-phosphoglycerate + 2 H(+) = D-ribulose 1,5-bisphosphate + CO2 + H2O. The catalysed reaction is D-ribulose 1,5-bisphosphate + O2 = 2-phosphoglycolate + (2R)-3-phosphoglycerate + 2 H(+). In terms of biological role, ruBisCO catalyzes two reactions: the carboxylation of D-ribulose 1,5-bisphosphate, the primary event in carbon dioxide fixation, as well as the oxidative fragmentation of the pentose substrate in the photorespiration process. Both reactions occur simultaneously and in competition at the same active site. This chain is Ribulose bisphosphate carboxylase large chain, found in Pelargonium grandiflorum (Geranium).